Consider the following 823-residue polypeptide: Tax1-binding protein 1 homolog B (823 aa).

Residues Val-149–Gln-487 adopt a coiled-coil conformation. 2 disordered regions span residues His-342 to Asn-377 and Glu-486 to Asp-519. Over residues Lys-356 to Gln-368 the composition is skewed to basic and acidic residues. Positions Ala-498–Ser-518 are enriched in low complexity. The stretch at Gln-548 to Asn-638 forms a coiled coil. The segment at Met-650 to Phe-746 is disordered. The span at Leu-723 to Ala-739 shows a compositional bias: acidic residues. 2 consecutive UBZ1-type zinc fingers follow at residues Gln-762–His-788 and Trp-789–His-815. 8 residues coordinate Zn(2+): Cys-765, Cys-768, His-784, His-788, Cys-792, Cys-795, His-811, and His-815.

Expressed at relatively high levels in both proximal and distal regions of the fin bud during pectoral fin development.

May have anti-apoptotic activity. This chain is Tax1-binding protein 1 homolog B (tax1bp1b), found in Danio rerio (Zebrafish).